Here is a 330-residue protein sequence, read N- to C-terminus: Biotin synthase (330 aa).

The Radical SAM core domain occupies 43–272; it reads FMGDKFDTCS…RAFLRFSGGR (230 aa). Residues Cys-61, Cys-65, and Cys-68 each coordinate [4Fe-4S] cluster. 4 residues coordinate [2Fe-2S] cluster: Ser-105, Cys-137, Cys-197, and Arg-267.

It belongs to the radical SAM superfamily. Biotin synthase family. Homodimer. It depends on [4Fe-4S] cluster as a cofactor. The cofactor is [2Fe-2S] cluster.

It catalyses the reaction (4R,5S)-dethiobiotin + (sulfur carrier)-SH + 2 reduced [2Fe-2S]-[ferredoxin] + 2 S-adenosyl-L-methionine = (sulfur carrier)-H + biotin + 2 5'-deoxyadenosine + 2 L-methionine + 2 oxidized [2Fe-2S]-[ferredoxin]. The protein operates within cofactor biosynthesis; biotin biosynthesis; biotin from 7,8-diaminononanoate: step 2/2. In terms of biological role, catalyzes the conversion of dethiobiotin (DTB) to biotin by the insertion of a sulfur atom into dethiobiotin via a radical-based mechanism. The protein is Biotin synthase of Porphyromonas gingivalis (strain ATCC 33277 / DSM 20709 / CIP 103683 / JCM 12257 / NCTC 11834 / 2561).